Reading from the N-terminus, the 769-residue chain is MLCRCSPLLLLVGLLTLRSALSQECAKYKVSTCRDCIESGPGCAWCQKLNFSGQGEPDSVRCDTREQLLAKGCVADDIVDPRSLAETQEDQAGGQKQLSPQKVTLYLRPGQAATFNVTFRRAKGYPIDLYYLMDLSYSMLDDLINVKKLGGDLLRALNEITESGRIGFGSFVDKTVLPFVNTHPEKLRNPCPNKEKECQAPFAFRHVLKLTDNSNQFQTEVGKQLISGNLDAPEGGLDAMMQVAACPEEIGWRNVTRLLVFATDDGFHFAGDGKLGAILTPNDGRCHLEDNLYKSSNEFDYPSVGQLAHKLAESNIQPIFAVTKKMVKTYEKLTDIIPKSAVGELSEDSSNVLELIKNAYNKLSSRVFLDHNALPDTLKVTYDSFCSNGVSQVNQPRGDCDGVQINVPITFQVKVTASECIQEQSFVIRALGFTDTVTVRVLPQCECRCGDSSKERTLCGNKGSMECGVCRCDAGYIGKHCECQTQGRSSQELEGSCRKDNSSIICSGLGDCICGQCVCHTSDVPNKKIYGQFCECDNMNCERFDGQVCGGEKRGLCFCSTCRCQEGFEGSACQCLKSTQGCLNLQGVECSGRGRCRCNVCQCDFGYQPPLCTDCPSCQVPCARYAKCAECLKFDTGPFAKNCSAECGTTKLLPSRMSGRKCNERDSEGCWMTYFLVQRDGRDNYDLHVEETRECVKGPNIAAIVGGTVGGVVLVGIFLLVIWKVLTHLSDLREYKRFEKEKLKSQWNNDNPLFKSATTTVMNPKFAER.

Positions 1-22 (MLCRCSPLLLLVGLLTLRSALS) are cleaved as a signal peptide. Pyrrolidone carboxylic acid is present on Gln-23. Over 23 to 700 (QECAKYKVST…ETRECVKGPN (678 aa)) the chain is Extracellular. Residues 24 to 74 (ECAKYKVSTCRDCIESGPGCAWCQKLNFSGQGEPDSVRCDTREQLLAKGCV) enclose the PSI domain. Cystine bridges form between Cys-25–Cys-43, Cys-33–Cys-447, Cys-36–Cys-62, Cys-46–Cys-73, Cys-191–Cys-198, Cys-246–Cys-286, Cys-386–Cys-400, Cys-420–Cys-445, Cys-449–Cys-467, Cys-459–Cys-470, Cys-472–Cys-481, Cys-483–Cys-514, Cys-497–Cys-512, Cys-506–Cys-517, Cys-519–Cys-534, Cys-536–Cys-559, Cys-541–Cys-557, Cys-549–Cys-562, Cys-564–Cys-573, Cys-575–Cys-598, Cys-582–Cys-596, Cys-590–Cys-601, Cys-603–Cys-612, Cys-615–Cys-618, Cys-622–Cys-662, Cys-628–Cys-647, Cys-631–Cys-643, and Cys-670–Cys-695. N-linked (GlcNAc...) asparagine glycans are attached at residues Asn-50 and Asn-116. A VWFA domain is found at 124-363 (GYPIDLYYLM…ELIKNAYNKL (240 aa)). Mg(2+) contacts are provided by Ser-136 and Ser-138. Residues Ser-138, Asp-141, Asp-142, and Asp-173 each contribute to the Ca(2+) site. Positions 229, 231, 233, and 234 each coordinate Ca(2+). Residue Glu-234 participates in Mg(2+) binding. The N-linked (GlcNAc...) asparagine glycan is linked to Asn-254. Ca(2+) is bound by residues Asp-264 and Glu-347. A Cell attachment site motif is present at residues 397–399 (RGD). 4 consecutive I-EGF domains span residues 449 to 482 (CGDSSKERTLCGNKGSMECGVCRCDAGYIGKHCE), 483 to 535 (CQTQ…QFCE), 536 to 574 (CDNMNCERFDGQVCGGEKRGLCFCSTCRCQEGFEGSACQ), and 575 to 613 (CLKSTQGCLNLQGVECSGRGRCRCNVCQCDFGYQPPLCT). Residue Asn-501 is glycosylated (N-linked (GlcNAc...) asparagine). Asn-642 carries an N-linked (GlcNAc...) asparagine glycan. The chain crosses the membrane as a helical span at residues 701–723 (IAAIVGGTVGGVVLVGIFLLVIW). Over 724-769 (KVLTHLSDLREYKRFEKEKLKSQWNNDNPLFKSATTTVMNPKFAER) the chain is Cytoplasmic. Ser-745 and Ser-756 each carry phosphoserine. Thr-758 and Thr-760 each carry phosphothreonine.

It belongs to the integrin beta chain family. Heterodimer of an alpha and a beta subunit. The ITGB2 beta subunit associates with the ITGAL, ITGAM, ITGAX or ITGAD alpha subunits. Found in a complex with CD177 and ITGAM/CD11b. Interacts with FGR. Interacts with COPS5 and RANBP9. Interacts with FLNA (via filamin repeats 4, 9, 12, 17, 19, 21, and 23). Interacts with THBD. Both Ser-745 and Ser-756 become phosphorylated when T-cells are exposed to phorbol esters. Phosphorylation on Thr-758 (but not on Ser-756) allows interaction with 14-3-3 proteins.

The protein resides in the cell membrane. The protein localises to the membrane raft. Its function is as follows. Integrin ITGAL/ITGB2 is a receptor for ICAM1, ICAM2, ICAM3 and ICAM4. Integrin ITGAL/ITGB2 is also a receptor for the secreted form of ubiquitin-like protein ISG15; the interaction is mediated by ITGAL. Integrins ITGAM/ITGB2 and ITGAX/ITGB2 are receptors for the iC3b fragment of the third complement component and for fibrinogen. Integrin ITGAX/ITGB2 recognizes the sequence G-P-R in fibrinogen alpha-chain. Integrin ITGAM/ITGB2 recognizes P1 and P2 peptides of fibrinogen gamma chain. Integrin ITGAM/ITGB2 is also a receptor for factor X. Integrin ITGAD/ITGB2 is a receptor for ICAM3 and VCAM1. Contributes to natural killer cell cytotoxicity. Involved in leukocyte adhesion and transmigration of leukocytes including T-cells and neutrophils. Triggers neutrophil transmigration during lung injury through PTK2B/PYK2-mediated activation. Integrin alpha-L/beta-2 in association with ICAM3, contributes to apoptotic neutrophil phagocytosis by macrophages. The protein is Integrin beta-2 (ITGB2) of Sus scrofa (Pig).